Reading from the N-terminus, the 264-residue chain is 3-methyl-2-oxobutanoate hydroxymethyltransferase (264 aa).

Mg(2+) is bound by residues aspartate 45 and aspartate 84. Residues 45–46 (DS), aspartate 84, and lysine 112 each bind 3-methyl-2-oxobutanoate. Mg(2+) is bound at residue glutamate 114. Glutamate 181 acts as the Proton acceptor in catalysis.

The protein belongs to the PanB family. In terms of assembly, homodecamer; pentamer of dimers. Mg(2+) serves as cofactor.

The protein localises to the cytoplasm. The enzyme catalyses 3-methyl-2-oxobutanoate + (6R)-5,10-methylene-5,6,7,8-tetrahydrofolate + H2O = 2-dehydropantoate + (6S)-5,6,7,8-tetrahydrofolate. Its pathway is cofactor biosynthesis; (R)-pantothenate biosynthesis; (R)-pantoate from 3-methyl-2-oxobutanoate: step 1/2. In terms of biological role, catalyzes the reversible reaction in which hydroxymethyl group from 5,10-methylenetetrahydrofolate is transferred onto alpha-ketoisovalerate to form ketopantoate. The chain is 3-methyl-2-oxobutanoate hydroxymethyltransferase from Shigella sonnei (strain Ss046).